The chain runs to 179 residues: Gut granule loss protein 3 (179 aa).

The interval 40-59 (DLDSASSGVGSSTCTEEQES) is disordered. The span at 42–54 (DSASSGVGSSTCT) shows a compositional bias: polar residues.

The sequence is that of Gut granule loss protein 3 (glo-3) from Caenorhabditis elegans.